A 186-amino-acid polypeptide reads, in one-letter code: TATA-box-binding protein 2 (186 aa).

Tandem repeats lie at residues 10–86 (IQNV…FDKL) and 101–179 (VQNI…VERI). Residues Lys-53 and Lys-63 each participate in a glycyl lysine isopeptide (Lys-Gly) (interchain with G-Cter in SAMP2) cross-link.

It belongs to the TBP family.

Functionally, general factor that plays a role in the activation of archaeal genes transcribed by RNA polymerase. Binds specifically to the TATA box promoter element which lies close to the position of transcription initiation. In Haloferax volcanii (strain ATCC 29605 / DSM 3757 / JCM 8879 / NBRC 14742 / NCIMB 2012 / VKM B-1768 / DS2) (Halobacterium volcanii), this protein is TATA-box-binding protein 2 (tbp2).